The chain runs to 226 residues: Enolase-phosphatase E1 (226 aa).

This sequence belongs to the HAD-like hydrolase superfamily. MasA/MtnC family. As to quaternary structure, monomer. Mg(2+) serves as cofactor.

It catalyses the reaction 5-methylsulfanyl-2,3-dioxopentyl phosphate + H2O = 1,2-dihydroxy-5-(methylsulfanyl)pent-1-en-3-one + phosphate. It participates in amino-acid biosynthesis; L-methionine biosynthesis via salvage pathway; L-methionine from S-methyl-5-thio-alpha-D-ribose 1-phosphate: step 3/6. The protein operates within amino-acid biosynthesis; L-methionine biosynthesis via salvage pathway; L-methionine from S-methyl-5-thio-alpha-D-ribose 1-phosphate: step 4/6. In terms of biological role, bifunctional enzyme that catalyzes the enolization of 2,3-diketo-5-methylthiopentyl-1-phosphate (DK-MTP-1-P) into the intermediate 2-hydroxy-3-keto-5-methylthiopentenyl-1-phosphate (HK-MTPenyl-1-P), which is then dephosphorylated to form the acireductone 1,2-dihydroxy-3-keto-5-methylthiopentene (DHK-MTPene). The chain is Enolase-phosphatase E1 from Shewanella baltica (strain OS155 / ATCC BAA-1091).